The primary structure comprises 255 residues: uncharacterized protein (255 aa).

Transmembrane regions (helical) follow at residues 99–119 (ISLI…ITSF) and 146–166 (YIGS…ILFL).

It is found in the mitochondrion membrane. This is an uncharacterized protein from Schizosaccharomyces pombe (strain 972 / ATCC 24843) (Fission yeast).